Reading from the N-terminus, the 179-residue chain is Transthyretin-like protein 46 (179 aa).

The signal sequence occupies residues 1-17 (MNKLFVLLIALLGLTAA). The tract at residues 144–179 (RRGGFNADYMDPDNSEKDQSKSSEESEDKEKTVETF) is disordered. The segment covering 157-179 (NSEKDQSKSSEESEDKEKTVETF) has biased composition (basic and acidic residues).

The protein belongs to the nematode transthyretin-like family.

It is found in the secreted. This Caenorhabditis elegans protein is Transthyretin-like protein 46 (ttr-46).